The following is an 817-amino-acid chain: Coiled-coil domain-containing protein 175 (817 aa).

Coiled coils occupy residues 130–166 (ILEI…ALGI) and 217–594 (LQDA…KQEE). Residues 761 to 817 (EEESPSSLSKEDLQKAGMKQKEEKTLRFSPSLHTRRDTLSRNCKMIKKRSRSPKNKP) form a disordered region. The span at 769–786 (SKEDLQKAGMKQKEEKTL) shows a compositional bias: basic and acidic residues. Over residues 804–817 (KMIKKRSRSPKNKP) the composition is skewed to basic residues.

This Rattus norvegicus (Rat) protein is Coiled-coil domain-containing protein 175 (Ccdc175).